A 150-amino-acid polypeptide reads, in one-letter code: Small ribosomal subunit protein bS6 (150 aa).

Residues 92-150 form a disordered region; it reads KGINKPAKPKKTFKKTFVARKFSRDDESKTHSTEEPRRANTKSTYKKSTSFSQDNKNKK. Residues 98 to 109 show a composition bias toward basic residues; sequence AKPKKTFKKTFV. Over residues 113–129 the composition is skewed to basic and acidic residues; sequence FSRDDESKTHSTEEPRR. Positions 132 to 141 are enriched in low complexity; that stretch reads TKSTYKKSTS.

This sequence belongs to the bacterial ribosomal protein bS6 family.

Its function is as follows. Binds together with bS18 to 16S ribosomal RNA. In Mycoplasmopsis pulmonis (strain UAB CTIP) (Mycoplasma pulmonis), this protein is Small ribosomal subunit protein bS6.